Consider the following 207-residue polypeptide: Sodium/potassium-transporting ATPase subunit beta-1-interacting protein 1 (207 aa).

The next 3 helical transmembrane spans lie at 2-22 (GKCSGRCTLVAFCCLQLVAAL), 35-55 (APILANFLHIMAVILGIFGTV), and 62-82 (LILYAAWLVLWVGWNAFIICF). N-linked (GlcNAc...) asparagine glycosylation is present at asparagine 100. The helical transmembrane segment at 147 to 167 (ALSSALQIFLALFGFVFACYV) threads the bilayer.

This sequence belongs to the NKAIN family. As to quaternary structure, interacts with ATP1B1 C-terminus. As to expression, detected in the brain only and specifically in neurons. Expressed in multiple regions such as cerebral cortex, thalamus, hippocampus, olfactory bulb and brainstem as well as in cerebellum with high expression in granular cell layer.

The protein localises to the cell membrane. The chain is Sodium/potassium-transporting ATPase subunit beta-1-interacting protein 1 (Nkain1) from Mus musculus (Mouse).